Reading from the N-terminus, the 383-residue chain is Queuine tRNA-ribosyltransferase (383 aa).

The active-site Proton acceptor is the D89. Substrate-binding positions include 89–93 (DSGGF), D143, Q187, and G214. The tract at residues 245 to 251 (GVGDLID) is RNA binding. Residue D264 is the Nucleophile of the active site. An RNA binding; important for wobble base 34 recognition region spans residues 269–273 (TRNAR). Zn(2+) is bound by residues C302, C304, C307, and H333.

It belongs to the queuine tRNA-ribosyltransferase family. Homodimer. Within each dimer, one monomer is responsible for RNA recognition and catalysis, while the other monomer binds to the replacement base PreQ1. Zn(2+) serves as cofactor.

It carries out the reaction 7-aminomethyl-7-carbaguanine + guanosine(34) in tRNA = 7-aminomethyl-7-carbaguanosine(34) in tRNA + guanine. It functions in the pathway tRNA modification; tRNA-queuosine biosynthesis. In terms of biological role, catalyzes the base-exchange of a guanine (G) residue with the queuine precursor 7-aminomethyl-7-deazaguanine (PreQ1) at position 34 (anticodon wobble position) in tRNAs with GU(N) anticodons (tRNA-Asp, -Asn, -His and -Tyr). Catalysis occurs through a double-displacement mechanism. The nucleophile active site attacks the C1' of nucleotide 34 to detach the guanine base from the RNA, forming a covalent enzyme-RNA intermediate. The proton acceptor active site deprotonates the incoming PreQ1, allowing a nucleophilic attack on the C1' of the ribose to form the product. After dissociation, two additional enzymatic reactions on the tRNA convert PreQ1 to queuine (Q), resulting in the hypermodified nucleoside queuosine (7-(((4,5-cis-dihydroxy-2-cyclopenten-1-yl)amino)methyl)-7-deazaguanosine). The polypeptide is Queuine tRNA-ribosyltransferase (Thermodesulfovibrio yellowstonii (strain ATCC 51303 / DSM 11347 / YP87)).